A 493-amino-acid chain; its full sequence is MDQDYERRLLRQIIIQNENTVPCVSEMRRTLTPANSPVSSPSKHGDRFIPSRAGANWSVNFHRINENEKSPSQNRKAKDATSDNGKDGLAYSALLKNELLGAGIEKVQDPQTEDRRLQPSTPEHKGLFTYSLSSKRSSPDDGNDVSPYSLSPVSNKSQKLLRSPRKPTRKISKIPFKVLDAPELQDDFYLNLVDWSSLNVLSVGLGTCVYLWSACTSQVTRLCDLSVEGDSVTSVGWSERGNLVAVGTHKGFVQIWDAAAGKKLSMLEGHTARVGALAWNADQLSSGSRDRMILQRDIRTPPLQSERRLQGHRQEVCGLKWSTDHQLLASGGNDNKLLVWNHSSLSPVQQYTEHLAAVKAIAWSPHQHGLLASGGGTADRCIRFWNTLTGQPLQCIDTGSQVCNLAWSKHANELVSTHGYSQNQILVWKYPSLTQVAKLTGHSYRVLYLAMSPDGEAIVTGAGDETLRFWNVFSKTRSTKESVSVLNLFTRIR.

Disordered regions lie at residues 31-51 (LTPANSPVSSPSKHGDRFIPS), 64-88 (INENEKSPSQNRKAKDATSDNGKDG), and 105-166 (EKVQ…SPRK). At T32 the chain carries Phosphothreonine. A compositionally biased stretch (polar residues) spans 32–42 (TPANSPVSSPS). A Phosphoserine modification is found at S36. K69 is subject to N6-acetyllysine. Basic and acidic residues-rich tracts occupy residues 76–86 (KAKDATSDNGK) and 106–126 (KVQDPQTEDRRLQPSTPEHKG). S133, S138, S146, and S151 each carry phosphoserine. The span at 146-160 (SPYSLSPVSNKSQKL) shows a compositional bias: polar residues. At K159 the chain carries N6-acetyllysine. WD repeat units lie at residues 182 to 222 (PELQ…VTRL), 227 to 266 (VEGDSVTSVGWSERGNLVAVGTHKGFVQIWDAAAGKKLSM), 269 to 306 (GHTARVGALAWNADQLSSGSRDRMILQRDIRTPPLQSE), 311 to 350 (GHRQEVCGLKWSTDHQLLASGGNDNKLLVWNHSSLSPVQQ), 353 to 395 (EHLA…PLQC), 397 to 438 (DTGS…QVAK), and 441 to 480 (GHSYRVLYLAMSPDGEAIVTGAGDETLRFWNVFSKTRSTK).

The protein belongs to the WD repeat CDC20/Fizzy family. In terms of assembly, the unphosphorylated form interacts with APC/C during mitosis. Interacts with NINL. Interacts (in complex with the anaphase promoting complex APC) with MAD2L2; inhibits FZR1-mediated APC/C activation. Interacts with SIRT2. Interacts with USP37. Interacts (via WD repeats) with MAK. Interacts with RBBP8/CtIP; this interaction leads to RBBP8 proteasomal degradation. Interacts with HECW2. Interacts with SASS6; the interaction is regulated by CENATAC and leads to SASS6 proteasomal degradation. Interacts (via N-terminus) with CCNF. Interacts with CDC6. Interacts with TK1 (via the KEN box). In terms of processing, acetylated. Deacetylated by SIRT2 at Lys-69 and Lys-159; deacetylation enhances the interaction of FZR1 with CDC27, leading to activation of anaphase promoting complex/cyclosome (APC/C). Post-translationally, following DNA damage, it is dephosphorylated by CDC14B in G2 phase, leading to its reassociation with the APC/C, and allowing an efficient G2 DNA damage checkpoint. Phosphorylated by MAK.

Its pathway is protein modification; protein ubiquitination. Its function is as follows. Substrate-specific adapter for the anaphase promoting complex/cyclosome (APC/C) E3 ubiquitin-protein ligase complex. Associates with the APC/C in late mitosis, in replacement of CDC20, and activates the APC/C during anaphase and telophase. The APC/C remains active in degrading substrates to ensure that positive regulators of the cell cycle do not accumulate prematurely. At the G1/S transition FZR1 is phosphorylated, leading to its dissociation from the APC/C. Following DNA damage, it is required for the G2 DNA damage checkpoint: its dephosphorylation and reassociation with the APC/C leads to the ubiquitination of PLK1, preventing entry into mitosis. Acts as an adapter for APC/C to target the DNA-end resection factor RBBP8/CtIP for ubiquitination and subsequent proteasomal degradation. Through the regulation of RBBP8/CtIP protein turnover, may play a role in DNA damage response, favoring DNA double-strand repair through error-prone non-homologous end joining (NHEJ) over error-free, RBBP8-mediated homologous recombination (HR). In Mus musculus (Mouse), this protein is Fizzy-related protein homolog (Fzr1).